The following is a 983-amino-acid chain: Inner tegument protein (983 aa).

The tract at residues 474 to 983 (LNVNTHFAVQ…TSVSLPPASP (510 aa)) is interaction with large tegument protein. The tract at residues 902–932 (PWESAPQPPRLRMTPDTDHEESTAGATSVPE) is disordered. A compositionally biased stretch (basic and acidic residues) spans 914–923 (MTPDTDHEES).

This sequence belongs to the herpesviridae inner tegument protein family. As to quaternary structure, interacts (via C-terminus) with the large tegument protein/LTP (via N-terminus).

It is found in the virion tegument. The protein localises to the host cytoplasm. The protein resides in the host nucleus. It localises to the host Golgi apparatus. Its subcellular location is the host trans-Golgi network. Plays an essential role in cytoplasmic secondary envelopment during viral egress. Interacts with the capsid via the large tegument protein/LTP and participates in its transport to the host trans-Golgi network (TGN) where secondary envelopment occurs. Modulates tegumentation and capsid accumulation at the viral assembly complex. The protein is Inner tegument protein (UL47) of Homo sapiens (Human).